Consider the following 300-residue polypeptide: Serine/arginine-rich splicing factor SR34A (300 aa).

The 76-residue stretch at 7-82 folds into the RRM 1 domain; sequence RSIYVGNLPG…CRLRVELAHG (76 aa). Disordered regions lie at residues 81–110 and 198–300; these read HGGR…GGGG and YESS…EGSV. Over residues 94–110 the composition is skewed to gly residues; it reads GYGGGGSGYGGGGGGGG. The 79-residue stretch at 122 to 200 folds into the RRM 2 domain; that stretch reads FRVIVRGLPS…GFIRVKKYES (79 aa). Residues 203–239 are compositionally biased toward basic residues; that stretch reads SRSRSPSRSRSRSRSRSRSRGRGRSHSRSRSLSRSKS. Phosphoserine is present on residues serine 207, serine 209, serine 231, serine 233, serine 239, serine 259, serine 275, and serine 285. Over residues 253-262 the composition is skewed to low complexity; sequence SRSISKSRSP. Residues 275–287 show a composition bias toward basic residues; it reads SRSKSRSRSRSRS.

Belongs to the splicing factor SR family. SR subfamily. Component of the spliceosome.

It is found in the nucleus speckle. Its subcellular location is the nucleus. It localises to the nucleoplasm. In terms of biological role, probably involved in intron recognition and spliceosome assembly. The protein is Serine/arginine-rich splicing factor SR34A (SR34A) of Arabidopsis thaliana (Mouse-ear cress).